Consider the following 331-residue polypeptide: Ferredoxin--NADP reductase (331 aa).

FAD is bound by residues E34, Q42, Y47, V87, F120, D285, and T325.

It belongs to the ferredoxin--NADP reductase type 2 family. In terms of assembly, homodimer. It depends on FAD as a cofactor.

It carries out the reaction 2 reduced [2Fe-2S]-[ferredoxin] + NADP(+) + H(+) = 2 oxidized [2Fe-2S]-[ferredoxin] + NADPH. This chain is Ferredoxin--NADP reductase, found in Levilactobacillus brevis (strain ATCC 367 / BCRC 12310 / CIP 105137 / JCM 1170 / LMG 11437 / NCIMB 947 / NCTC 947) (Lactobacillus brevis).